The chain runs to 191 residues: Gamma-glutamylaminecyclotransferase B (191 aa).

Residue 7 to 10 (YGTL) participates in substrate binding. Glutamate 82 (proton acceptor) is an active-site residue. Positions 155–178 (SADFSQNSEQEIKKNNSLQILTST) are enriched in polar residues. Positions 155-191 (SADFSQNSEQEIKKNNSLQILTSTGDDHDVNFRGPLQ) are disordered.

Belongs to the gamma-glutamylcyclotransferase family.

It carries out the reaction epsilon-(gamma-L-glutamyl)-L-lysine = 5-oxo-L-proline + L-lysine. Functionally, may contribute to degradation of proteins cross-linked by transglutaminases by degrading the cross-link between a lysine and a glutamic acid residue. Catalyzes the formation of 5-oxo-L-proline from L-gamma-glutamyl-L-epsilon-lysine. This Danio rerio (Zebrafish) protein is Gamma-glutamylaminecyclotransferase B (ggact.2).